A 335-amino-acid polypeptide reads, in one-letter code: Anthranilate phosphoribosyltransferase (335 aa).

5-phospho-alpha-D-ribose 1-diphosphate is bound by residues Gly79, 82-83 (GD), Ser87, 89-92 (NIST), 107-115 (KHGNRSISS), and Ser119. Gly79 is an anthranilate binding site. Ser91 contributes to the Mg(2+) binding site. Position 110 (Asn110) interacts with anthranilate. Arg165 contributes to the anthranilate binding site. Positions 224 and 225 each coordinate Mg(2+).

Belongs to the anthranilate phosphoribosyltransferase family. In terms of assembly, homodimer. Requires Mg(2+) as cofactor.

It carries out the reaction N-(5-phospho-beta-D-ribosyl)anthranilate + diphosphate = 5-phospho-alpha-D-ribose 1-diphosphate + anthranilate. It functions in the pathway amino-acid biosynthesis; L-tryptophan biosynthesis; L-tryptophan from chorismate: step 2/5. In terms of biological role, catalyzes the transfer of the phosphoribosyl group of 5-phosphorylribose-1-pyrophosphate (PRPP) to anthranilate to yield N-(5'-phosphoribosyl)-anthranilate (PRA). This chain is Anthranilate phosphoribosyltransferase, found in Streptococcus mutans serotype c (strain ATCC 700610 / UA159).